Reading from the N-terminus, the 333-residue chain is Glycerol-3-phosphate dehydrogenase [NAD(P)+] (333 aa).

Residues S10, W11, H31, R32, and K105 each coordinate NADPH. Sn-glycerol 3-phosphate-binding residues include K105, G136, and S138. A140 provides a ligand contact to NADPH. Sn-glycerol 3-phosphate contacts are provided by K191, D244, S254, R255, and N256. Residue K191 is the Proton acceptor of the active site. R255 is an NADPH binding site. NADPH-binding residues include I279 and E281.

This sequence belongs to the NAD-dependent glycerol-3-phosphate dehydrogenase family.

It localises to the cytoplasm. It carries out the reaction sn-glycerol 3-phosphate + NAD(+) = dihydroxyacetone phosphate + NADH + H(+). The catalysed reaction is sn-glycerol 3-phosphate + NADP(+) = dihydroxyacetone phosphate + NADPH + H(+). It functions in the pathway membrane lipid metabolism; glycerophospholipid metabolism. Catalyzes the reduction of the glycolytic intermediate dihydroxyacetone phosphate (DHAP) to sn-glycerol 3-phosphate (G3P), the key precursor for phospholipid synthesis. The protein is Glycerol-3-phosphate dehydrogenase [NAD(P)+] of Chlorobium chlorochromatii (strain CaD3).